The sequence spans 296 residues: Enoyl-CoA hydratase ACTT3 (296 aa).

The Peroxisomal targeting signal type 1 signature appears at 294–296 (PKL).

This sequence belongs to the enoyl-CoA hydratase/isomerase family.

It localises to the peroxisome. It catalyses the reaction a (3S)-3-hydroxyacyl-CoA = a (2E)-enoyl-CoA + H2O. The enzyme catalyses a 4-saturated-(3S)-3-hydroxyacyl-CoA = a (3E)-enoyl-CoA + H2O. It participates in mycotoxin biosynthesis. In terms of biological role, enoyl-CoA hydratase; part of the gene clusters that mediate the biosynthesis of the host-selective toxins (HSTs) ACT-toxins responsible for brown spot of tangerine disease by the tangerine pathotype which affects tangerines and mandarins. ACT-toxins consist of three moieties, 9,10-epoxy-8-hydroxy-9-methyl-decatrienoic acid (EDA), valine and a polyketide. ACT-toxin I is toxic to both citrus and pear; toxin II the 5''-deoxy derivative of ACT-toxin I, is highly toxic to pear and slightly toxic to citrus. On cellular level, ACT-toxins affect plasma membrane of susceptible cells and cause a sudden increase in loss of K(+) after a few minutes of toxin treatment. The acyl-CoA ligase ACTT1, the hydrolase ACTT2, the enoyl-CoA hydratases ACTT3 and ACTT6, and the acyl-CoA synthetase ACTT5 are all involved in the biosynthesis of the AK-, AF- and ACT-toxin common 9,10-epoxy-8-hydroxy-9-methyl-decatrienoic acid (EDA) structural moiety. The exact role of each enzyme, and of additional enzymes identified within the AF-toxin clusters have still to be determined. On the other hand, ACTTS1 to ACTTS4 are specific to the tangerine pathotype. The function of ACTTS3 is to elongate the polyketide chain portion of ACT-toxin that is unique to this toxin. The enoyl-reductase ACTTS2 might complement the missing enoyl-reductase (ER) domain in ACTTS3 in the synthesis of the polyketide portion of ACT-toxin. The roles of the nonribosomal peptide synthetases-related proteins ACTTS1 and ACTTS4 have also still not been elucidated. The chain is Enoyl-CoA hydratase ACTT3 from Alternaria alternata (Alternaria rot fungus).